The sequence spans 424 residues: Virion nicking-joining enzyme (424 aa).

PLD phosphodiesterase domains are found at residues 110–137 (LGGVLHTKFWISDNTHIYLGSANMDWRS) and 320–346 (YSRVNHAKYMVTDKTAYIGTSNWTGNY).

It belongs to the orthopoxvirus OPG042 family.

It is found in the virion. In terms of biological role, DNA nicking enzyme that cleaves extruded cruciform DNA at its tip. Probably nicks viral hairpins. The sequence is that of Virion nicking-joining enzyme (OPG042) from Vaccinia virus (strain Western Reserve) (VACV).